Reading from the N-terminus, the 270-residue chain is 4-hydroxy-tetrahydrodipicolinate reductase (270 aa).

NAD(+) is bound by residues Gly9–Met14 and Glu35. An NADP(+)-binding site is contributed by Arg36. NAD(+)-binding positions include Gly99–Thr101 and Ala123–Phe126. The active-site Proton donor/acceptor is the His156. His157 is a (S)-2,3,4,5-tetrahydrodipicolinate binding site. The Proton donor role is filled by Lys160. Gly166 to Thr167 serves as a coordination point for (S)-2,3,4,5-tetrahydrodipicolinate.

Belongs to the DapB family.

It is found in the cytoplasm. The catalysed reaction is (S)-2,3,4,5-tetrahydrodipicolinate + NAD(+) + H2O = (2S,4S)-4-hydroxy-2,3,4,5-tetrahydrodipicolinate + NADH + H(+). It carries out the reaction (S)-2,3,4,5-tetrahydrodipicolinate + NADP(+) + H2O = (2S,4S)-4-hydroxy-2,3,4,5-tetrahydrodipicolinate + NADPH + H(+). Its pathway is amino-acid biosynthesis; L-lysine biosynthesis via DAP pathway; (S)-tetrahydrodipicolinate from L-aspartate: step 4/4. Its function is as follows. Catalyzes the conversion of 4-hydroxy-tetrahydrodipicolinate (HTPA) to tetrahydrodipicolinate. In Haemophilus influenzae (strain ATCC 51907 / DSM 11121 / KW20 / Rd), this protein is 4-hydroxy-tetrahydrodipicolinate reductase.